The sequence spans 119 residues: Large ribosomal subunit protein bL20c (119 aa).

Belongs to the bacterial ribosomal protein bL20 family.

It localises to the plastid. The protein resides in the chloroplast. In terms of biological role, binds directly to 23S ribosomal RNA and is necessary for the in vitro assembly process of the 50S ribosomal subunit. It is not involved in the protein synthesizing functions of that subunit. The chain is Large ribosomal subunit protein bL20c from Brachypodium distachyon (Purple false brome).